Here is a 325-residue protein sequence, read N- to C-terminus: DNA-directed RNA polymerase subunit alpha (325 aa).

Positions 1 to 231 (MQTSLLKPKI…DQLSVFAALE (231 aa)) are alpha N-terminal domain (alpha-NTD). The interval 246–325 (IDPILLRPVD…ENWPPAGLDK (80 aa)) is alpha C-terminal domain (alpha-CTD).

It belongs to the RNA polymerase alpha chain family. As to quaternary structure, homodimer. The RNAP catalytic core consists of 2 alpha, 1 beta, 1 beta' and 1 omega subunit. When a sigma factor is associated with the core the holoenzyme is formed, which can initiate transcription.

The catalysed reaction is RNA(n) + a ribonucleoside 5'-triphosphate = RNA(n+1) + diphosphate. Its function is as follows. DNA-dependent RNA polymerase catalyzes the transcription of DNA into RNA using the four ribonucleoside triphosphates as substrates. This is DNA-directed RNA polymerase subunit alpha from Paraburkholderia phytofirmans (strain DSM 17436 / LMG 22146 / PsJN) (Burkholderia phytofirmans).